We begin with the raw amino-acid sequence, 138 residues long: Ribosome-binding factor A (138 aa).

It belongs to the RbfA family. Monomer. Binds 30S ribosomal subunits, but not 50S ribosomal subunits or 70S ribosomes.

It localises to the cytoplasm. Functionally, one of several proteins that assist in the late maturation steps of the functional core of the 30S ribosomal subunit. Associates with free 30S ribosomal subunits (but not with 30S subunits that are part of 70S ribosomes or polysomes). Required for efficient processing of 16S rRNA. May interact with the 5'-terminal helix region of 16S rRNA. This Paracoccus denitrificans (strain Pd 1222) protein is Ribosome-binding factor A.